The chain runs to 197 residues: Probable GTP-binding protein EngB (197 aa).

Residues Thr-22–Gln-197 enclose the EngB-type G domain. GTP-binding positions include Gly-30–Ser-37, Gly-57–Leu-61, Asp-75–Gly-78, Thr-142–Asp-145, and Phe-177–Ser-179. Mg(2+) contacts are provided by Ser-37 and Thr-59.

This sequence belongs to the TRAFAC class TrmE-Era-EngA-EngB-Septin-like GTPase superfamily. EngB GTPase family. Mg(2+) is required as a cofactor.

In terms of biological role, necessary for normal cell division and for the maintenance of normal septation. This is Probable GTP-binding protein EngB from Francisella tularensis subsp. holarctica (strain FTNF002-00 / FTA).